The sequence spans 138 residues: MLIPRRVKHRKQHHPGRSGAATGGTEVSFGEWGIQALSPAYVTNRQIESARIAMTRHIKRGGKVWINIYPDRPLTKKPAETRMGSGKGSPEWWVANVKPGRVLFELSGVNEEVAREALRLAIHKLPLKARIVRREGGE.

Residues 1-16 (MLIPRRVKHRKQHHPG) show a composition bias toward basic residues. The disordered stretch occupies residues 1–25 (MLIPRRVKHRKQHHPGRSGAATGGT).

Belongs to the universal ribosomal protein uL16 family. In terms of assembly, part of the 50S ribosomal subunit.

Its function is as follows. Binds 23S rRNA and is also seen to make contacts with the A and possibly P site tRNAs. The protein is Large ribosomal subunit protein uL16 of Pseudarthrobacter chlorophenolicus (strain ATCC 700700 / DSM 12829 / CIP 107037 / JCM 12360 / KCTC 9906 / NCIMB 13794 / A6) (Arthrobacter chlorophenolicus).